The primary structure comprises 260 residues: MSVISMKQLLEAGVHFGHQTRRWNPKMKPFIFTERNGIYIIDLQKTVKLIDNAYNFVKDVAANDGVVLFVGTKKQAQTAIEEEAKRAGQYFVNHRWLGGTLTNWNTIQKRIKRLKDLKAMEEDGTFDRLPKKEVALLNKQKDKLEKFLGGIEDMPHTPDVLFVVDPRKEQIAIKEAQKLNIPVVAMVDTNSDPDQVDVIIPSNDDAIRAVRLITAKMADAVIEGRQGEDEEEASQEVAEGVSKDSLEDLKKSVEEGSNEE.

The disordered stretch occupies residues glutamate 223 to glutamate 260. The segment covering valine 241–glutamate 254 has biased composition (basic and acidic residues).

It belongs to the universal ribosomal protein uS2 family.

The sequence is that of Small ribosomal subunit protein uS2 from Pediococcus pentosaceus (strain ATCC 25745 / CCUG 21536 / LMG 10740 / 183-1w).